The chain runs to 313 residues: MSGIDPKRFGKVAVLFGGESAEREVSLTSGRLVLQGLRDAGVDAHPFDPAERPLSALKDEGFVRAFNALHGGYGENGQIQGALDFYGIRYTGSGVLGSALGLDKFRTKLVWQQTGVPTPPFETVMRGDDLAARATDIVAKLGLPLFVKPASEGSSVAVLKVKTADALPAALAEAATHDKIVIVEKSIEGGGEYTACIAGDLDLPLIKIVPAGEFYDYHAKYVADDTQYLIPCGLPAEQETELKRIARRAFDVLGCTDWGRADFMLDAAGNAYFLEVNTAPGMTDHSLPPKAARAVGIGYSELVVKVLSLTLND.

In terms of domain architecture, ATP-grasp spans 108–308; it reads KLVWQQTGVP…YSELVVKVLS (201 aa). ATP is bound at residue 138-193; that stretch reads VAKLGLPLFVKPASEGSSVAVLKVKTADALPAALAEAATHDKIVIVEKSIEGGGEY. Mg(2+) contacts are provided by D262, E275, and N277.

It belongs to the D-alanine--D-alanine ligase family. Requires Mg(2+) as cofactor. Mn(2+) is required as a cofactor.

It localises to the cytoplasm. It carries out the reaction 2 D-alanine + ATP = D-alanyl-D-alanine + ADP + phosphate + H(+). Its pathway is cell wall biogenesis; peptidoglycan biosynthesis. Cell wall formation. The protein is D-alanine--D-alanine ligase of Burkholderia cenocepacia (strain HI2424).